Consider the following 340-residue polypeptide: Fructose-1,6-bisphosphatase class 1 (340 aa).

Residues E107, D126, L128, and D129 each contribute to the Mg(2+) site. N215 provides a ligand contact to substrate. E287 provides a ligand contact to Mg(2+).

The protein belongs to the FBPase class 1 family. In terms of assembly, homotetramer. Mg(2+) serves as cofactor.

It localises to the cytoplasm. The catalysed reaction is beta-D-fructose 1,6-bisphosphate + H2O = beta-D-fructose 6-phosphate + phosphate. The protein operates within carbohydrate biosynthesis; gluconeogenesis. In Brucella suis (strain ATCC 23445 / NCTC 10510), this protein is Fructose-1,6-bisphosphatase class 1.